We begin with the raw amino-acid sequence, 778 residues long: High affinity nerve growth factor receptor (778 aa).

The first 14 residues, 1-14 (WGCLRLPLPLCHAL), serve as a signal peptide directing secretion. Residues 15–400 (AAHCRCPASH…VETADEHTFG (386 aa)) are Extracellular-facing. Residues Cys-18 and Cys-20 are joined by a disulfide bond. LRR repeat units follow at residues 71–92 (DLRH…AFQD) and 95–116 (RLSH…TFQH). 11 N-linked (GlcNAc...) asparagine glycosylation sites follow: Asn-100, Asn-130, Asn-143, Asn-151, Asn-194, Asn-234, Asn-262, Asn-300, Asn-320, Asn-340, and Asn-384. The region spanning 127 to 175 (NPFNCSCGIRWLQLWQNGSRAELGNQSLLCWEGSMLVALDSHPLHDCEP) is the LRRCT domain. Cysteines 133 and 173 form a disulfide. Ig-like C2-type domains are found at residues 175–262 (PPTA…VMLN) and 281–347 (WCIP…VVQN). A disulfide bond links Cys-282 and Cys-327. Residues 401–421 (VSVAVALAVFASLFLSVMLIA) traverse the membrane as a helical segment. Topologically, residues 422 to 778 (LNKCGHRSKF…TPPIYLDILG (357 aa)) are cytoplasmic. Phosphotyrosine; by autocatalysis is present on Tyr-479. The 271-residue stretch at 493–763 (IVLKWELGEG…RSIQDIHSRL (271 aa)) folds into the Protein kinase domain. ATP is bound by residues 499–507 (LGEGAFGKV) and Lys-527. Asp-633 functions as the Proton acceptor in the catalytic mechanism. 4 positions are modified to phosphotyrosine; by autocatalysis: Tyr-659, Tyr-663, Tyr-664, and Tyr-773.

It belongs to the protein kinase superfamily. Tyr protein kinase family. Insulin receptor subfamily. As to quaternary structure, exists in a dynamic equilibrium between monomeric (low affinity) and dimeric (high affinity) structures. Homodimerization is induced by NGF dimer binding. Interacts with PTPRS. In terms of processing, ligand-mediated auto-phosphorylation. Ubiquitinated. Undergoes polyubiquitination upon activation; regulated by NGFR. Ubiquitination regulates the internalization of the receptor.

It localises to the cell membrane. The protein localises to the early endosome membrane. It is found in the late endosome membrane. The protein resides in the recycling endosome membrane. It carries out the reaction L-tyrosyl-[protein] + ATP = O-phospho-L-tyrosyl-[protein] + ADP + H(+). With respect to regulation, the pro-survival signaling effect of NTRK1 in neurons requires its endocytosis into signaling early endosomes and its retrograde axonal transport. In terms of biological role, receptor tyrosine kinase involved in the development and the maturation of the central and peripheral nervous systems through regulation of proliferation, differentiation and survival of sympathetic and nervous neurons. High affinity receptor for NGF which is its primary ligand, it can also bind and be activated by NTF3/neurotrophin-3. Upon dimeric NGF ligand-binding, undergoes homodimerization, autophosphorylation and activation. Recruits, phosphorylates and/or activates several downstream effectors that regulate distinct overlapping signaling cascades driving cell survival and differentiation. In absence of ligand and activation, may promote cell death, making the survival of neurons dependent on trophic factors. The protein is High affinity nerve growth factor receptor (NTRK1) of Gallus gallus (Chicken).